A 332-amino-acid chain; its full sequence is Solute carrier family 25 member 16 (332 aa).

3 Solcar repeats span residues 34–120, 128–216, and 238–328; these read FYWL…YKTL, SGHV…LKSV, and LKTH…MKQF. Transmembrane regions (helical) follow at residues 37–57, 88–108, 134–154, 191–211, 244–264, and 299–319; these read LRSF…VAPL, GFLG…PYGA, LMAG…LDMV, GLMP…FTFG, LLCG…FDVT, and GLYR…AVAF.

This sequence belongs to the mitochondrial carrier (TC 2.A.29) family.

It is found in the mitochondrion inner membrane. Functionally, may be involved in the transport of coenzyme A in the mitochondrial matrix. Very little is known about the physiological function of this carrier. This is Solute carrier family 25 member 16 from Homo sapiens (Human).